The sequence spans 359 residues: Protein RecA (359 aa).

77-84 (GPESSGKT) is an ATP binding site.

The protein belongs to the RecA family.

It is found in the cytoplasm. In terms of biological role, can catalyze the hydrolysis of ATP in the presence of single-stranded DNA, the ATP-dependent uptake of single-stranded DNA by duplex DNA, and the ATP-dependent hybridization of homologous single-stranded DNAs. It interacts with LexA causing its activation and leading to its autocatalytic cleavage. The sequence is that of Protein RecA from Azospirillum lipoferum (strain 4B).